Reading from the N-terminus, the 140-residue chain is uncharacterized protein (140 aa).

The next 2 membrane-spanning stretches (helical) occupy residues 4–21 (ILKF…YLFG) and 26–48 (LVKV…SGYL).

The protein belongs to the bacteriophage holin family. Cp-1 holin subfamily.

The protein resides in the cell membrane. This is an uncharacterized protein from Listeria monocytogenes serovar 1/2a (strain ATCC BAA-679 / EGD-e).